Reading from the N-terminus, the 292-residue chain is 4-hydroxy-tetrahydrodipicolinate synthase (292 aa).

Threonine 44 serves as a coordination point for pyruvate. Tyrosine 132 serves as the catalytic Proton donor/acceptor. The active-site Schiff-base intermediate with substrate is lysine 161. Isoleucine 203 contacts pyruvate.

This sequence belongs to the DapA family. Homotetramer.

Its subcellular location is the cytoplasm. The catalysed reaction is L-aspartate 4-semialdehyde + pyruvate = (2S,4S)-4-hydroxy-2,3,4,5-tetrahydrodipicolinate + H2O + H(+). It functions in the pathway amino-acid biosynthesis; L-lysine biosynthesis via DAP pathway; (S)-tetrahydrodipicolinate from L-aspartate: step 3/4. With respect to regulation, is feedback inhibited by lysine. Is competitively inhibited by 2-oxobutyrate with respect to pyruvate. Functionally, catalyzes the condensation of (S)-aspartate-beta-semialdehyde [(S)-ASA] and pyruvate to 4-hydroxy-tetrahydrodipicolinate (HTPA). The protein is 4-hydroxy-tetrahydrodipicolinate synthase of Rhizobium meliloti (Ensifer meliloti).